Reading from the N-terminus, the 285-residue chain is Pyrroline-5-carboxylate reductase (285 aa).

This sequence belongs to the pyrroline-5-carboxylate reductase family. Homotetramer.

It carries out the reaction L-proline + NADP(+) = (S)-1-pyrroline-5-carboxylate + NADPH + 2 H(+). The catalysed reaction is L-proline + NAD(+) = (S)-1-pyrroline-5-carboxylate + NADH + 2 H(+). Its pathway is amino-acid biosynthesis; L-proline biosynthesis; L-proline from L-glutamate 5-semialdehyde: step 1/1. This chain is Pyrroline-5-carboxylate reductase, found in Kluyveromyces lactis (strain ATCC 8585 / CBS 2359 / DSM 70799 / NBRC 1267 / NRRL Y-1140 / WM37) (Yeast).